Here is a 1227-residue protein sequence, read N- to C-terminus: Pentatricopeptide repeat-containing protein At5g15280, mitochondrial (1227 aa).

A mitochondrion-targeting transit peptide spans 1–31 (MLNLLSISSSSRLRFLNKVSSLTYHYSFAFF). 28 PPR repeats span residues 146–180 (LPQA…GDTM), 182–216 (NEGI…GLVP), 217–251 (LTSC…RAEL), 255–289 (NIDS…GCIL), 290–320 (NSSI…VKYE), 322–356 (DVFV…GFKQ), 357–391 (DEVT…GYKP), 392–426 (DVYS…GMML), 427–461 (SLST…GLIE), 527–561 (VLPE…GQKL), 562–597 (SRRS…AYQL), 598–632 (DGET…HHPI), 633–667 (DNVT…NWLP), 668–698 (DLND…VFIS), 703–737 (QSEA…GCIV), 738–772 (EQEV…KHIP), 773–800 (SLGS…AEQI), 802–836 (SSYV…GLSS), 837–871 (YNKI…NIIC), 872–906 (SVKS…ESNP), 908–942 (GVII…GVLP), 943–977 (DETT…GMKP), 978–1012 (NNRS…GWNL), 1014–1044 (SSVV…VTRN), 1047–1081 (MAPN…QSIP), 1082–1116 (GSSS…GLSP), 1117–1151 (SIST…GESP), and 1152–1186 (SQEM…GYEV).

The protein belongs to the PPR family. P subfamily.

It is found in the mitochondrion. The chain is Pentatricopeptide repeat-containing protein At5g15280, mitochondrial from Arabidopsis thaliana (Mouse-ear cress).